We begin with the raw amino-acid sequence, 607 residues long: Glutamyl-tRNA(Gln) amidotransferase subunit E (607 aa).

The segment at 399 to 428 is disordered; that stretch reads GVPEETRGANPDGTTRFLRPRPGAARMYPE.

The protein belongs to the GatB/GatE family. GatE subfamily. Heterodimer of GatD and GatE.

The enzyme catalyses L-glutamyl-tRNA(Gln) + L-glutamine + ATP + H2O = L-glutaminyl-tRNA(Gln) + L-glutamate + ADP + phosphate + H(+). Functionally, allows the formation of correctly charged Gln-tRNA(Gln) through the transamidation of misacylated Glu-tRNA(Gln) in organisms which lack glutaminyl-tRNA synthetase. The reaction takes place in the presence of glutamine and ATP through an activated gamma-phospho-Glu-tRNA(Gln). The GatDE system is specific for glutamate and does not act on aspartate. This Pyrobaculum neutrophilum (strain DSM 2338 / JCM 9278 / NBRC 100436 / V24Sta) (Thermoproteus neutrophilus) protein is Glutamyl-tRNA(Gln) amidotransferase subunit E.